The primary structure comprises 1153 residues: Duffy receptor beta form (1153 aa).

The signal sequence occupies residues 1 to 21 (MEGKKKRPLFFLLVLLLSHKA). Residues 22–1085 (NNVLFERMKG…YECFTKGSST (1064 aa)) lie on the Extracellular side of the membrane. N-linked (GlcNAc...) asparagine glycans are attached at residues asparagine 134, asparagine 179, and asparagine 202. 2 cysteine pairs are disulfide-bonded: cysteine 214/cysteine 243 and cysteine 227/cysteine 234. N-linked (GlcNAc...) asparagine glycans are attached at residues asparagine 252 and asparagine 348. 4 disulfides stabilise this stretch: cysteine 297–cysteine 374, cysteine 412–cysteine 429, cysteine 424–cysteine 504, and cysteine 433–cysteine 502. 2 N-linked (GlcNAc...) asparagine glycosylation sites follow: asparagine 430 and asparagine 467. Disordered stretches follow at residues 520–545 (LKSAPKLETQRSHSTIQPMSSSGAEK), 565–591 (DEAAKGDGQNGNQTVAESNIKGTDNIE), 612–631 (RGATDITETGEEKLNTSYSG), and 655–981 (ENSE…LYSH). Composition is skewed to polar residues over residues 531–542 (SHSTIQPMSSSG) and 574–586 (NGNQTVAESNIKG). 2 N-linked (GlcNAc...) asparagine glycosylation sites follow: asparagine 576 and asparagine 626. A compositionally biased stretch (basic and acidic residues) spans 661-675 (LETKHKIFEPSKDNS). A compositionally biased stretch (polar residues) spans 677 to 733 (NSENSGSMEFKATSSNPITEAVESSSAEGQVQEDSAHRSVNTGRDNSTISAATSDDG). Asparagine 722 carries an N-linked (GlcNAc...) asparagine glycan. Basic and acidic residues predominate over residues 791-800 (IDGKNVDIAE). Polar residues predominate over residues 819–834 (TDNGNVPRSGNKQNEG). Residues asparagine 847 and asparagine 856 are each glycosylated (N-linked (GlcNAc...) asparagine). Residues 867-878 (GNEKDFQKHDFM) are compositionally biased toward basic and acidic residues. Over residues 884-942 (NDQTSSDQTSSDQTSSNQTSSDQTSSNQTSSDQTSSDQISSDQTSSDQTSSNQTSSDQT) the composition is skewed to low complexity. 3 N-linked (GlcNAc...) asparagine glycosylation sites follow: asparagine 900, asparagine 910, and asparagine 935. A compositionally biased stretch (basic and acidic residues) spans 945-969 (TEEHHRDNVRNPEIKSSEDMSKGDF). The segment covering 971–981 (RNSNSNELYSH) has biased composition (polar residues). Residues 1086–1106 (GIGIVYFATGGAFLIILLLFV) form a helical membrane-spanning segment. Residues 1107-1153 (SKNVASNDYEEEATFDEFVEYSDDIHRTPLMPNHIEHMQQFTPLDYS) lie on the Cytoplasmic side of the membrane.

The protein localises to the membrane. In terms of biological role, binds to Neu5Gc-sialylated receptors on macaque erythrocytes. The sequence is that of Duffy receptor beta form from Plasmodium knowlesi.